We begin with the raw amino-acid sequence, 257 residues long: Proteasome assembly chaperone 1 (257 aa).

The protein belongs to the PSMG1 family. Forms a heterodimer with psmg2.

Chaperone protein which promotes assembly of the 20S proteasome as part of a heterodimer with psmg2. This is Proteasome assembly chaperone 1 (psmg1) from Nematostella vectensis (Starlet sea anemone).